We begin with the raw amino-acid sequence, 545 residues long: DNA-binding protein REPIN1 (545 aa).

The disordered stretch occupies residues 1-50 (MLEQRCRGPTAMGPAQPWLFSGPSQESSQPDRGLRYQGKSAQPRGQTPGK). Ser-27 carries the phosphoserine modification. Residue Lys-39 is modified to N6-acetyllysine. A C2H2-type 1; atypical zinc finger spans residues 52 to 74 (HRCAHCRKRFPGWVALWLHARRC). 2 C2H2-type zinc fingers span residues 80–102 (LPCH…LQVH) and 111–133 (FICH…LRAH). Residues 140 to 162 (ITCPECDRRFWRQKQLRAHLRRC) form a C2H2-type 4; atypical zinc finger. 11 consecutive C2H2-type zinc fingers follow at residues 172 to 194 (FICG…KRVH), 229 to 251 (FQCA…RRVH), 257 to 279 (HQCP…RRIH), 285 to 307 (YPCT…SKIH), 353 to 375 (HSCS…QRQH), 381 to 403 (FACT…SRVH), 409 to 431 (FACE…RRDH), 437 to 459 (FVCP…RRIH), 465 to 487 (YVCP…RRIH), 493 to 515 (YACP…RKSH), and 521 to 543 (FCCA…QKKH). The residue at position 269 (Lys-269) is an N6-acetyllysine.

Homodimers and homomultimers. Found in a complex with RIP60 and RIP100.

The protein localises to the nucleus. It localises to the cytoplasm. The protein resides in the cytosol. Sequence-specific double-stranded DNA-binding protein. Binds ATT-rich and T-rich DNA sequences and facilitates DNA bending. May regulate the expression of genes involved in cellular fatty acid import, including SCARB1/CD36, and genes involved in lipid droplet formation. May regulate the expression of LCN2, and thereby influence iron metabolism and apoptosis-related pathways. May regulate the expression of genes involved in glucose transport. The protein is DNA-binding protein REPIN1 (Repin1) of Mus musculus (Mouse).